The chain runs to 246 residues: Bromelain inhibitor (246 aa).

The first 19 residues, 1-19, serve as a signal peptide directing secretion; sequence MNMLLLFLHEVINGERVTL. 5 disulfides stabilise this stretch: Cys-22-Cys-42, Cys-25-Cys-74, Cys-27-Cys-40, Cys-49-Cys-56, and Cys-53-Cys-65. A propeptide spanning residues 31 to 35 is cleaved from the precursor; that stretch reads TSSSD. Propeptides lie at residues 77 to 95 and 107 to 111; these read PVSS…RVTL and TSSSD. 5 cysteine pairs are disulfide-bonded: Cys-98/Cys-118, Cys-101/Cys-150, Cys-103/Cys-116, Cys-125/Cys-132, and Cys-129/Cys-141. Propeptides lie at residues 153–171 and 183–187; these read PVSS…RVTL and TSSSD. Intrachain disulfides connect Cys-174–Cys-194, Cys-177–Cys-226, Cys-179–Cys-192, Cys-201–Cys-208, and Cys-205–Cys-217. A propeptide spanning residues 229 to 246 is cleaved from the precursor; sequence PVSSWEARQKIKLLQGRE.

It belongs to the protease inhibitor I67 family. As to quaternary structure, each inhibitor is composed of two chains, designated A and B linked by three disulfide bonds.

Its function is as follows. Weak inhibitor of cysteine proteinases. The chain is Bromelain inhibitor from Ananas comosus (Pineapple).